Consider the following 359-residue polypeptide: 3-dehydroquinate synthase (359 aa).

Residues 69-74, 103-107, 127-128, lysine 140, lysine 149, and 167-170 contribute to the NAD(+) site; these read DGEAHK, GVIGD, TT, and TLDT. Zn(2+) contacts are provided by glutamate 182, histidine 245, and histidine 262.

This sequence belongs to the sugar phosphate cyclases superfamily. Dehydroquinate synthase family. The cofactor is Co(2+). It depends on Zn(2+) as a cofactor. NAD(+) is required as a cofactor.

It localises to the cytoplasm. The enzyme catalyses 7-phospho-2-dehydro-3-deoxy-D-arabino-heptonate = 3-dehydroquinate + phosphate. The protein operates within metabolic intermediate biosynthesis; chorismate biosynthesis; chorismate from D-erythrose 4-phosphate and phosphoenolpyruvate: step 2/7. In terms of biological role, catalyzes the conversion of 3-deoxy-D-arabino-heptulosonate 7-phosphate (DAHP) to dehydroquinate (DHQ). The chain is 3-dehydroquinate synthase from Methylococcus capsulatus (strain ATCC 33009 / NCIMB 11132 / Bath).